The chain runs to 100 residues: Small ribosomal subunit protein uS14c (100 aa).

It belongs to the universal ribosomal protein uS14 family. Part of the 30S ribosomal subunit.

Its subcellular location is the plastid. The protein localises to the chloroplast. Binds 16S rRNA, required for the assembly of 30S particles. This Gossypium barbadense (Sea Island cotton) protein is Small ribosomal subunit protein uS14c.